Reading from the N-terminus, the 470-residue chain is Syncoilin (470 aa).

A disordered region spans residues 1–43 (MASPEPLRGGDGARASREPHTEASFPLQESESPKEAKTFNPEA). The tract at residues 1-148 (MASPEPLRGG…TEGSLPAQPI (148 aa)) is head. Serine 32 carries the phosphoserine modification. One can recognise an IF rod domain in the interval 157 to 452 (SVEDLERLEA…AMLPKSLEQA (296 aa)). The tract at residues 158-192 (VEDLERLEARFQQCVQAVSQLEEERDQLIHELVLL) is coil 1A. Positions 193–219 (REPALQEVQQVHQDILAAYKLHAQAEL) are linker 1. Residues 220–297 (ERDGLREEIR…KEQLQQQLEA (78 aa)) form a coil 1b region. The interval 298–337 (PPTQSDGHFLQESRRLSTQFENLMAESRQGLEEEYEPQLL) is linker 2. Residue serine 314 is modified to Phosphoserine. The interval 338 to 445 (RLLERKEAGT…EELSTYKAML (108 aa)) is coil 2. Residues 446–470 (PKSLEQADAPTSQAGGVEAQSPGTV) are disordered. A tail region spans residues 446 to 470 (PKSLEQADAPTSQAGGVEAQSPGTV).

The protein belongs to the intermediate filament family. May link the dystrophin-associated glycoprotein complex (DAPC) to intracellular desmin (DES) filaments. Interacts with DES and DTNA. In terms of tissue distribution, detected strongly in skeletal muscle and heart and weakly in lung (at protein level). Highly expressed in skeletal muscle and lung and weakly in lung and testis.

It localises to the cytoplasm. The protein resides in the perinuclear region. In terms of biological role, atypical type III intermediate filament (IF) protein that may play a supportive role in the efficient coupling of mechanical stress between the myofibril and fiber exterior. May facilitate lateral force transmission during skeletal muscle contraction. Does not form homofilaments nor heterofilaments with other IF proteins. This Mus musculus (Mouse) protein is Syncoilin (Sync).